A 457-amino-acid polypeptide reads, in one-letter code: Acetate--CoA ligase [ADP-forming] II subunit alpha (457 aa).

The protein belongs to the acetate CoA ligase alpha subunit family. As to quaternary structure, heterotetramer of two alpha and two beta subunits.

It catalyses the reaction acetate + ATP + CoA = acetyl-CoA + ADP + phosphate. Its function is as follows. Catalyzes the reversible formation of acetate and ATP from acetyl-CoA by using ADP and phosphate. Can use other substrates such as phenylacetyl-CoA, indoleacetyl-CoA and isobutyryl-CoA, but not succinyl-CoA. Seems to be involved primarily in the degradation of aryl-CoA esters to the corresponding acids. Participates in the conversion of acetyl-CoA to acetate and in the degradation of branched-chain amino acids via branched-chain-acyl-CoA esters. This is Acetate--CoA ligase [ADP-forming] II subunit alpha from Pyrococcus furiosus (strain ATCC 43587 / DSM 3638 / JCM 8422 / Vc1).